Reading from the N-terminus, the 2512-residue chain is Probable polyketide synthase 5 (2512 aa).

The Ketosynthase family 3 (KS3) domain occupies 17–447 (MKGVAIVGIG…GSNCCLLISE (431 aa)). Residues cysteine 187, histidine 329, and histidine 368 each act as for beta-ketoacyl synthase activity in the active site. The tract at residues 638–671 (GVNPSFILGHSLGEIPTSYCSGMIDLDTFCYTVY) is acyl/malonyl transferase. The For acyl/malonyl transferase activity role is filled by serine 648. Residues 928–1050 (IDHLGLSNSY…ANFQLLDHTI (123 aa)) form an N-terminal hotdog fold region. The PKS/mFAS DH domain occupies 928-1210 (IDHLGLSNSY…SKSLIPIKEL (283 aa)). Histidine 962 serves as the catalytic Proton acceptor; for dehydratase activity. The interval 1067–1210 (TLARLTKNEI…SKSLIPIKEL (144 aa)) is C-terminal hotdog fold. Aspartate 1125 (proton donor; for dehydratase activity) is an active-site residue. The 78-residue stretch at 2430-2507 (AGSKNVDELF…VSIKIILNFL (78 aa)) folds into the Carrier domain. Position 2467 is an O-(pantetheine 4'-phosphoryl)serine (serine 2467).

Requires pantetheine 4'-phosphate as cofactor.

Functionally, probable polyketide synthase. This Dictyostelium discoideum (Social amoeba) protein is Probable polyketide synthase 5 (pks5).